Consider the following 223-residue polypeptide: Phosphoribosylformylglycinamidine synthase subunit PurQ (223 aa).

Residues 3 to 223 (SAVVQLPGLN…FASALDVVAA (221 aa)) form the Glutamine amidotransferase type-1 domain. The active-site Nucleophile is the Cys86. Active-site residues include His196 and Glu198.

Part of the FGAM synthase complex composed of 1 PurL, 1 PurQ and 2 PurS subunits.

The protein localises to the cytoplasm. It catalyses the reaction N(2)-formyl-N(1)-(5-phospho-beta-D-ribosyl)glycinamide + L-glutamine + ATP + H2O = 2-formamido-N(1)-(5-O-phospho-beta-D-ribosyl)acetamidine + L-glutamate + ADP + phosphate + H(+). The enzyme catalyses L-glutamine + H2O = L-glutamate + NH4(+). Its pathway is purine metabolism; IMP biosynthesis via de novo pathway; 5-amino-1-(5-phospho-D-ribosyl)imidazole from N(2)-formyl-N(1)-(5-phospho-D-ribosyl)glycinamide: step 1/2. Functionally, part of the phosphoribosylformylglycinamidine synthase complex involved in the purines biosynthetic pathway. Catalyzes the ATP-dependent conversion of formylglycinamide ribonucleotide (FGAR) and glutamine to yield formylglycinamidine ribonucleotide (FGAM) and glutamate. The FGAM synthase complex is composed of three subunits. PurQ produces an ammonia molecule by converting glutamine to glutamate. PurL transfers the ammonia molecule to FGAR to form FGAM in an ATP-dependent manner. PurS interacts with PurQ and PurL and is thought to assist in the transfer of the ammonia molecule from PurQ to PurL. The sequence is that of Phosphoribosylformylglycinamidine synthase subunit PurQ from Rhizobium etli (strain ATCC 51251 / DSM 11541 / JCM 21823 / NBRC 15573 / CFN 42).